A 728-amino-acid polypeptide reads, in one-letter code: Peroxisome biogenesis protein 5 (728 aa).

Positions 1-58 are disordered; it reads MAMRDLVNGGAACAVPGSSSSSNPLGALTNALLGSSSKTQERLKEIPNANRSGPRPQF. An amphipathic helix 1 (AH1) region spans residues 11–97; the sequence is AACAVPGSSS…FRGFRSVDQN (87 aa). A Glycyl cysteine thioester (Cys-Gly) (interchain with G-Cter in ubiquitin) cross-link involves residue C13. Repeat copies occupy residues 240 to 244, 257 to 261, and 270 to 274. Short sequence motifs (wxxxF/Y motif) lie at residues 240 to 244, 257 to 261, and 270 to 274; these read WAAEF, WVQSF, and WATEF. The tract at residues 288–311 is amphipathic helix 3 (AH3); the sequence is SMDMQNIAAMEQTRKLAHTLSQDG. A run of 6 repeats spans residues 348–352, 362–366, 378–382, 396–400, 408–412, and 425–429. 6 consecutive short sequence motifs (wxxxF/Y motif) follow at residues 348-352, 362-366, 378-382, 396-400, 408-412, and 425-429; these read WATEY, WADQF, WADEF, WVNEF, WIDEF, and WANAY. An amphipathic helix 4 (AH4) region spans residues 392–417; sequence AEDQWVNEFSKLNVDDWIDEFAEGPV. TPR repeat units follow at residues 491 to 524, 590 to 623, 625 to 657, and 658 to 691; these read AEGWRLLGVTHAENDDDQQAIAAMMRAQEADPTN, ADVHIVLGVLYNLSREFDRAITSFQTALQLKPND, SLWNKLGATQANSVQSADAISAYQQALDLKPNY, and VRAWANMGISYANQGMYKESIPYYVRALAMNPKA.

It belongs to the peroxisomal targeting signal receptor family. Interacts (via WxxxF/Y and LVxEF motifs) with PEX14; promoting translocation through the PEX13-PEX14 docking complex. Interacts with PEX7, promoting peroxisomal import of proteins containing a C-terminal PTS2-type peroxisomal targeting signal. Interacts with LACS7. In terms of processing, monoubiquitinated at Cys-13 by PEX2 during PEX5 passage through the retrotranslocation channel. Cys-13 monoubiquitination acts as a recognition signal for the PEX1-PEX6 complex and is required for PEX5 extraction and export from peroxisomes. When PEX5 recycling is compromised, polyubiquitinated by PEX10 during its passage through the retrotranslocation channel, leading to its degradation. As to expression, expressed in flowers, siliques, leaves and roots.

It is found in the cytoplasm. The protein localises to the cytosol. Its subcellular location is the peroxisome matrix. Functionally, receptor that mediates peroxisomal import of proteins containing a C-terminal PTS1-type tripeptide peroxisomal targeting signal (SKL-type). Binds to cargo proteins containing a PTS1 peroxisomal targeting signal in the cytosol, and translocates them into the peroxisome matrix by passing through the PEX13-PEX14 docking complex along with cargo proteins. PEX5 receptor is then retrotranslocated into the cytosol, leading to release of bound cargo in the peroxisome matrix, and reset for a subsequent peroxisome import cycle. In addition to promoting peroxisomal translocation of proteins containing a PTS1 peroxisomal targeting signal, mediates peroxisomal import of proteins containing a C-terminal PTS2-type peroxisomal targeting signal via its interaction with PEX7. Interaction with PEX7 only takes place when PEX7 is associated with cargo proteins containing a PTS2 peroxisomal targeting signal. PEX7 along with PTS2-containing cargo proteins are then translocated through the PEX13-PEX14 docking complex together with PEX5. Necessary for the developmental elimination of obsolete peroxisome matrix proteins. The chain is Peroxisome biogenesis protein 5 (PEX5) from Arabidopsis thaliana (Mouse-ear cress).